Here is a 624-residue protein sequence, read N- to C-terminus: Chaperone protein HtpG (624 aa).

The tract at residues 1–336 (MKGQETRGFQ…SNDLPLNVSR (336 aa)) is a; substrate-binding. The interval 337–552 (EILQDSSITR…NDEMSTQMAK (216 aa)) is b. Positions 553 to 624 (LFAAAGQAVP…IRRMNQLLVS (72 aa)) are c.

The protein belongs to the heat shock protein 90 family. Homodimer.

The protein resides in the cytoplasm. In terms of biological role, molecular chaperone. Has ATPase activity. The sequence is that of Chaperone protein HtpG from Cronobacter sakazakii (strain ATCC BAA-894) (Enterobacter sakazakii).